A 672-amino-acid chain; its full sequence is Protein OS-9 (672 aa).

Positions 1–26 are cleaved as a signal peptide; it reads MAAEVLLSSLLGLLFLGLLLPARLTG. An MRH domain is found at 108–230; the sequence is APCLLKTKDW…TIRTSRLCPH (123 aa). Cys-110 and Cys-123 are joined by a disulfide. Residues Trp-117, Trp-118, and Gln-130 each contribute to the a mannooligosaccharide derivative site. A glycan (N-linked (GlcNAc...) asparagine) is linked at Asn-177. 2 disulfides stabilise this stretch: Cys-181/Cys-216 and Cys-196/Cys-228. Residues Asp-182, Arg-188, Glu-212, and Tyr-218 each contribute to the a mannooligosaccharide derivative site. Disordered stretches follow at residues 261–355, 372–452, 511–548, and 637–672; these read RQAE…NVQV, KAAE…LLPS, ENQS…RVRV, and EANK…EFDF. Composition is skewed to basic and acidic residues over residues 263 to 281, 294 to 310, 320 to 338, 372 to 386, and 394 to 409; these read AESK…DTDR, PKKE…ESEL, AAAR…HEAA, KAAE…REQP, and PQRE…KDGE. The span at 414–435 shows a compositional bias: acidic residues; that stretch reads MEEEDGDDEEEEEEEEEDEEEQ. The segment covering 637–652 has biased composition (basic and acidic residues); sequence EANKERQRQSELESNY. Residues 663-672 show a composition bias toward acidic residues; the sequence is DTGDLDEFDF.

Belongs to the OS-9 family. Component of the HRD1 complex, which comprises at least SYNV1/HRD1, DERL1/2, FAM8A1, HERPUD1/HERP, OS9, SEL1L and UBE2J1. FAM8A1 is stabilized by interaction with SYNV1, which prevents its proteasomal degradation. OS9 and UBE2J1 recruitment to the complex may be mediated by SEL1L. Through this complex, may interact with ERLEC1 and HSPA5. Interacts (via C-terminus) with CPNE6 (via second C2 domain); this interaction occurs in a calcium-dependent manner in vitro. Interacts with CREB3. N-glycosylated. Post-translationally, intramolecular disulfide bonds.

The protein localises to the endoplasmic reticulum lumen. In terms of biological role, lectin component of the HRD1 complex, which functions in endoplasmic reticulum (ER) quality control and ER-associated degradation (ERAD). Specifically recognizes and binds improperly folded glycoproteins as well as hyperglycosylated proteins, retain them in the ER, and transfers them to the ubiquitination machinery and promote their degradation. Possible targets include TRPV4 as well as hyperglycosylated HSP90B1. The chain is Protein OS-9 (Os9) from Mus musculus (Mouse).